We begin with the raw amino-acid sequence, 109 residues long: Protein reprimo (109 aa).

N7 and N18 each carry an N-linked (GlcNAc...) asparagine glycan. A helical membrane pass occupies residues 56-76 (VVQIAVMCVLSLTVVFGIFFL). Residue S98 is modified to Phosphoserine.

The protein belongs to the reprimo family.

Its subcellular location is the cytoplasm. It localises to the membrane. Its function is as follows. May be involved in the regulation of p53-dependent G2 arrest of the cell cycle. Seems to induce cell cycle arrest by inhibiting CDK1 activity and nuclear translocation of the CDC2 cyclin B1 complex. The sequence is that of Protein reprimo (Rprm) from Mus musculus (Mouse).